We begin with the raw amino-acid sequence, 95 residues long: Small ribosomal subunit protein uS15 (95 aa).

It belongs to the universal ribosomal protein uS15 family. Part of the 30S ribosomal subunit. Forms a bridge to the 50S subunit in the 70S ribosome, contacting the 23S rRNA.

In terms of biological role, one of the primary rRNA binding proteins, it binds directly to 16S rRNA where it helps nucleate assembly of the platform of the 30S subunit by binding and bridging several RNA helices of the 16S rRNA. Its function is as follows. Forms an intersubunit bridge (bridge B4) with the 23S rRNA of the 50S subunit in the ribosome. This Sulfurihydrogenibium sp. (strain YO3AOP1) protein is Small ribosomal subunit protein uS15.